We begin with the raw amino-acid sequence, 176 residues long: Large ribosomal subunit protein uL6 (176 aa).

This sequence belongs to the universal ribosomal protein uL6 family. As to quaternary structure, part of the 50S ribosomal subunit.

In terms of biological role, this protein binds to the 23S rRNA, and is important in its secondary structure. It is located near the subunit interface in the base of the L7/L12 stalk, and near the tRNA binding site of the peptidyltransferase center. In Lactobacillus helveticus (strain DPC 4571), this protein is Large ribosomal subunit protein uL6.